Here is a 55-residue protein sequence, read N- to C-terminus: Large ribosomal subunit protein bL33 (55 aa).

This sequence belongs to the bacterial ribosomal protein bL33 family.

This Buchnera aphidicola subsp. Schizaphis graminum (strain Sg) protein is Large ribosomal subunit protein bL33.